We begin with the raw amino-acid sequence, 247 residues long: ATP synthase subunit a, chloroplastic (247 aa).

The next 5 helical transmembrane spans lie at 38-58, 95-115, 134-154, 199-219, and 220-240; these read QVLI…LIAV, VPFI…GALL, INTT…AGLS, LVVV…VMFL, and GLFT…AYIG.

The protein belongs to the ATPase A chain family. As to quaternary structure, F-type ATPases have 2 components, CF(1) - the catalytic core - and CF(0) - the membrane proton channel. CF(1) has five subunits: alpha(3), beta(3), gamma(1), delta(1), epsilon(1). CF(0) has four main subunits: a, b, b' and c.

Its subcellular location is the plastid. It is found in the chloroplast thylakoid membrane. Its function is as follows. Key component of the proton channel; it plays a direct role in the translocation of protons across the membrane. The protein is ATP synthase subunit a, chloroplastic of Brachypodium distachyon (Purple false brome).